A 571-amino-acid chain; its full sequence is Coiled-coil domain-containing protein 22 homolog (571 aa).

Coiled coils occupy residues 406 to 434 and 509 to 571; these read MMDL…SRTA and CAEL…AHLR.

This sequence belongs to the CCDC22 family.

In Culex quinquefasciatus (Southern house mosquito), this protein is Coiled-coil domain-containing protein 22 homolog.